The primary structure comprises 307 residues: uncharacterized protein (307 aa).

8 helical membrane-spanning segments follow: residues Met-1–Leu-21, Ile-52–Val-72, Phe-99–Phe-119, Phe-133–Leu-153, Leu-174–Leu-194, Ala-208–Val-228, Val-242–Phe-262, and Phe-277–Tyr-297.

It localises to the cell membrane. This is an uncharacterized protein from Bacillus subtilis (strain 168).